Consider the following 542-residue polypeptide: CTP synthase (542 aa).

Residues 1–265 form an amidoligase domain region; that stretch reads MTRFIFITGG…DTQVLKFFGM (265 aa). Ser13 lines the CTP pocket. Ser13 provides a ligand contact to UTP. 14–19 contributes to the ATP binding site; it reads SLGKGL. Tyr54 contacts L-glutamine. Asp71 provides a ligand contact to ATP. The Mg(2+) site is built by Asp71 and Glu139. CTP contacts are provided by residues 146 to 148, 186 to 191, and Lys222; these read DIE and KTKPTQ. UTP contacts are provided by residues 186-191 and Lys222; that span reads KTKPTQ. The 251-residue stretch at 291 to 541 folds into the Glutamine amidotransferase type-1 domain; that stretch reads TIAVVGKYTS…IRAAIEQSRL (251 aa). Gly353 provides a ligand contact to L-glutamine. Cys380 acts as the Nucleophile; for glutamine hydrolysis in catalysis. L-glutamine contacts are provided by residues 381–384, Glu404, and Arg469; that span reads FGMQ. Residues His514 and Glu516 contribute to the active site.

This sequence belongs to the CTP synthase family. In terms of assembly, homotetramer.

It carries out the reaction UTP + L-glutamine + ATP + H2O = CTP + L-glutamate + ADP + phosphate + 2 H(+). The catalysed reaction is L-glutamine + H2O = L-glutamate + NH4(+). It catalyses the reaction UTP + NH4(+) + ATP = CTP + ADP + phosphate + 2 H(+). Its pathway is pyrimidine metabolism; CTP biosynthesis via de novo pathway; CTP from UDP: step 2/2. Its activity is regulated as follows. Allosterically activated by GTP, when glutamine is the substrate; GTP has no effect on the reaction when ammonia is the substrate. The allosteric effector GTP functions by stabilizing the protein conformation that binds the tetrahedral intermediate(s) formed during glutamine hydrolysis. Inhibited by the product CTP, via allosteric rather than competitive inhibition. Catalyzes the ATP-dependent amination of UTP to CTP with either L-glutamine or ammonia as the source of nitrogen. Regulates intracellular CTP levels through interactions with the four ribonucleotide triphosphates. This is CTP synthase from Rhodospirillum centenum (strain ATCC 51521 / SW).